A 159-amino-acid polypeptide reads, in one-letter code: Peptide methionine sulfoxide reductase MsrB (159 aa).

In terms of domain architecture, MsrB spans 22–144 (RERLEANLTA…NSVSLQFVKA (123 aa)). Residues C61, C64, C110, and C113 each contribute to the Zn(2+) site. The active-site Nucleophile is C133.

The protein belongs to the MsrB Met sulfoxide reductase family. Zn(2+) is required as a cofactor.

It carries out the reaction L-methionyl-[protein] + [thioredoxin]-disulfide + H2O = L-methionyl-(R)-S-oxide-[protein] + [thioredoxin]-dithiol. The protein is Peptide methionine sulfoxide reductase MsrB of Caulobacter vibrioides (strain ATCC 19089 / CIP 103742 / CB 15) (Caulobacter crescentus).